The following is a 623-amino-acid chain: Riboflavin biosynthesis protein PYRR, chloroplastic (623 aa).

The N-terminal 45 residues, 1-45 (MPLPQPLLGGASPAPARAASSFLHPLLHTRHRVSTAPAAASSFVP), are a transit peptide targeting the chloroplast. One can recognise a CMP/dCMP-type deaminase domain in the interval 52–181 (ANDAMLLRRA…ALRNEGIQVD (130 aa)).

It in the C-terminal section; belongs to the YbiA family.

The protein localises to the plastid. The protein resides in the chloroplast. The catalysed reaction is 5-amino-6-(5-phospho-D-ribitylamino)uracil + NADP(+) = 5-amino-6-(5-phospho-D-ribosylamino)uracil + NADPH + H(+). It catalyses the reaction 2,5-diamino-6-hydroxy-4-(5-phosphoribosylamino)-pyrimidine + H2O = 2,5,6-triamino-4-hydroxypyrimidine + D-ribose 5-phosphate. It carries out the reaction 5-amino-6-(5-phospho-D-ribosylamino)uracil + H2O = 5,6-diaminouracil + D-ribose 5-phosphate. It participates in cofactor biosynthesis; riboflavin biosynthesis; 5-amino-6-(D-ribitylamino)uracil from GTP: step 3/4. Its function is as follows. Pyrimidine reductase involved in the riboflavin biosynthesis pathway. Also has a non-functional N-terminal deaminase domain that lacks the catalytically essential zinc-binding residues. 39% activity when NADH replaces NADPH. No evidence for a phosphatase activity conferred by the N-terminal domain. Catalyzes the hydrolysis of the N-glycosidic bond in the first two intermediates of riboflavin biosynthesis, which are highly reactive metabolites, yielding relatively innocuous products. Thus, can divert a surplus of harmful intermediates into relatively harmless products and pre-empt the damage these intermediates would otherwise do. Has no activity against GTP, nucleoside monophosphates or ADP-ribose. This Zea mays (Maize) protein is Riboflavin biosynthesis protein PYRR, chloroplastic (PYRR).